We begin with the raw amino-acid sequence, 160 residues long: 6,7-dimethyl-8-ribityllumazine synthase (160 aa).

5-amino-6-(D-ribitylamino)uracil is bound by residues W27, 59 to 61 (AIE), and 81 to 83 (VVI). Position 86–87 (86–87 (QT)) interacts with (2S)-2-hydroxy-3-oxobutyl phosphate. H89 (proton donor) is an active-site residue. A 5-amino-6-(D-ribitylamino)uracil-binding site is contributed by N114. R128 is a binding site for (2S)-2-hydroxy-3-oxobutyl phosphate.

Belongs to the DMRL synthase family. In terms of assembly, homopentamer.

It carries out the reaction (2S)-2-hydroxy-3-oxobutyl phosphate + 5-amino-6-(D-ribitylamino)uracil = 6,7-dimethyl-8-(1-D-ribityl)lumazine + phosphate + 2 H2O + H(+). It functions in the pathway cofactor biosynthesis; riboflavin biosynthesis; riboflavin from 2-hydroxy-3-oxobutyl phosphate and 5-amino-6-(D-ribitylamino)uracil: step 1/2. Functionally, catalyzes the formation of 6,7-dimethyl-8-ribityllumazine by condensation of 5-amino-6-(D-ribitylamino)uracil with 3,4-dihydroxy-2-butanone 4-phosphate. This is the penultimate step in the biosynthesis of riboflavin. The chain is 6,7-dimethyl-8-ribityllumazine synthase (ribH) from Mycobacterium tuberculosis (strain CDC 1551 / Oshkosh).